The following is a 248-amino-acid chain: Ubiquinone biosynthesis O-methyltransferase (248 aa).

Residues arginine 40, glycine 71, aspartate 92, and methionine 135 each contribute to the S-adenosyl-L-methionine site.

The protein belongs to the methyltransferase superfamily. UbiG/COQ3 family.

It catalyses the reaction a 3-demethylubiquinol + S-adenosyl-L-methionine = a ubiquinol + S-adenosyl-L-homocysteine + H(+). The catalysed reaction is a 3-(all-trans-polyprenyl)benzene-1,2-diol + S-adenosyl-L-methionine = a 2-methoxy-6-(all-trans-polyprenyl)phenol + S-adenosyl-L-homocysteine + H(+). It functions in the pathway cofactor biosynthesis; ubiquinone biosynthesis. Functionally, O-methyltransferase that catalyzes the 2 O-methylation steps in the ubiquinone biosynthetic pathway. This chain is Ubiquinone biosynthesis O-methyltransferase, found in Roseobacter denitrificans (strain ATCC 33942 / OCh 114) (Erythrobacter sp. (strain OCh 114)).